The following is a 646-amino-acid chain: UvrABC system protein B (646 aa).

The region spanning 29-411 (LEKNPEKSKQ…SNQVVEQIIR (383 aa)) is the Helicase ATP-binding domain. 42–49 (GVTGSGKT) is an ATP binding site. The short motif at 95 to 118 (YYDYYQPESYIPQKDQYIEKDAQI) is the Beta-hairpin element. Residues 428–590 (QVEDIIKETE…ITPQTIVKPI (163 aa)) form the Helicase C-terminal domain. The region spanning 609–644 (PNVIVELEAEMYEAAEALEFEKAIKIRDTIAKLKKK) is the UVR domain.

The protein belongs to the UvrB family. In terms of assembly, forms a heterotetramer with UvrA during the search for lesions. Interacts with UvrC in an incision complex.

It is found in the cytoplasm. The UvrABC repair system catalyzes the recognition and processing of DNA lesions. A damage recognition complex composed of 2 UvrA and 2 UvrB subunits scans DNA for abnormalities. Upon binding of the UvrA(2)B(2) complex to a putative damaged site, the DNA wraps around one UvrB monomer. DNA wrap is dependent on ATP binding by UvrB and probably causes local melting of the DNA helix, facilitating insertion of UvrB beta-hairpin between the DNA strands. Then UvrB probes one DNA strand for the presence of a lesion. If a lesion is found the UvrA subunits dissociate and the UvrB-DNA preincision complex is formed. This complex is subsequently bound by UvrC and the second UvrB is released. If no lesion is found, the DNA wraps around the other UvrB subunit that will check the other stand for damage. The polypeptide is UvrABC system protein B (Methanococcus maripaludis (strain DSM 14266 / JCM 13030 / NBRC 101832 / S2 / LL)).